A 31-amino-acid polypeptide reads, in one-letter code: Ranatuerin-2PL (31 aa).

Cys23 and Cys29 are oxidised to a cystine.

As to expression, expressed by the skin glands.

The protein localises to the secreted. Antimicrobial activity against Gram-negative bacterium E.coli. This chain is Ranatuerin-2PL, found in Lithobates palustris (Pickerel frog).